A 383-amino-acid chain; its full sequence is MQFVLHKTASGVTRARRGTVHLNHGDVQTPAFMPVGTYGTVKGMLPRDIEAIGADIILGNTFHLWLRPGTDIIDKFGGLHKFMHWDKPILTDSGGFQVFSLGAMRKITEEGVTFKSPIDGAKVFLSPEKSMQIQYSLNSDIVMQFDECTPYPATHDEAKKSLELSLRWGQRCVDEHKNLGSTNALFGIIQGSMYADLRKQSLEGLLEIGFDGYAIGGLSVGEPKEEMIDVLDYIADDMPADKPRYLMGVGKPEDLVEGVRRGVDMFDCVMPTRNARNGHYFVTGDADNAGVVRIRNSQYRTDEGPLDPECDCYTCQNFSRAYLSHLNKCKEMLGAQLATIHNLRYYQRLMQNIRDAIEQDKFDEFVNEFYSKRGQTVPELNLR.

Aspartate 92 (proton acceptor) is an active-site residue. Substrate contacts are provided by residues 92–96 (DSGGF), aspartate 146, glutamine 190, and glycine 217. An RNA binding region spans residues 248–254 (GVGKPED). Aspartate 267 serves as the catalytic Nucleophile. Positions 272–276 (TRNAR) are RNA binding; important for wobble base 34 recognition. Positions 310, 312, 315, and 341 each coordinate Zn(2+).

This sequence belongs to the queuine tRNA-ribosyltransferase family. Homodimer. Within each dimer, one monomer is responsible for RNA recognition and catalysis, while the other monomer binds to the replacement base PreQ1. Zn(2+) serves as cofactor.

The enzyme catalyses 7-aminomethyl-7-carbaguanine + guanosine(34) in tRNA = 7-aminomethyl-7-carbaguanosine(34) in tRNA + guanine. The protein operates within tRNA modification; tRNA-queuosine biosynthesis. Catalyzes the base-exchange of a guanine (G) residue with the queuine precursor 7-aminomethyl-7-deazaguanine (PreQ1) at position 34 (anticodon wobble position) in tRNAs with GU(N) anticodons (tRNA-Asp, -Asn, -His and -Tyr). Catalysis occurs through a double-displacement mechanism. The nucleophile active site attacks the C1' of nucleotide 34 to detach the guanine base from the RNA, forming a covalent enzyme-RNA intermediate. The proton acceptor active site deprotonates the incoming PreQ1, allowing a nucleophilic attack on the C1' of the ribose to form the product. After dissociation, two additional enzymatic reactions on the tRNA convert PreQ1 to queuine (Q), resulting in the hypermodified nucleoside queuosine (7-(((4,5-cis-dihydroxy-2-cyclopenten-1-yl)amino)methyl)-7-deazaguanosine). The chain is Queuine tRNA-ribosyltransferase from Psychrobacter cryohalolentis (strain ATCC BAA-1226 / DSM 17306 / VKM B-2378 / K5).